The sequence spans 642 residues: Putative ankyrin repeat protein L91 (642 aa).

ANK repeat units lie at residues 42–76 (HFTK…VKNP), 85–118 (EGWT…NPNI), 153–186 (NGFT…NVDS), 190–224 (NGET…TLHK), 227–256 (NGFT…DVNA), 260–288 (EGKS…EINH), 292–322 (NDIN…NPNE), 326–360 (NKNA…NPNI), 365–397 (SRTI…NVNA), 401–434 (EGRT…NVNH), 438–470 (DGAH…DVNI), 475–514 (KKWT…NVNA), 518–550 (YGNN…NVNH), and 554–587 (NGDT…NPNI).

This chain is Putative ankyrin repeat protein L91, found in Acanthamoeba polyphaga (Amoeba).